We begin with the raw amino-acid sequence, 112 residues long: Ig kappa chain V-III region TEPC 124 (112 aa).

Residues 1–23 form a framework-1 region; it reads DIVLTQSPASLAVSLGQRATISC. The cysteines at positions 23 and 92 are disulfide-linked. Residues 24–38 are complementarity-determining-1; sequence RASZSVNWYGNSFMZ. The segment at 39–53 is framework-2; it reads WYZZKPGZPPKLLIY. The complementarity-determining-2 stretch occupies residues 54–60; that stretch reads RASNLZS. Residues 61–92 are framework-3; the sequence is GIPARFSGSGSRTBFTLTIBPVZABDVATYFC. The tract at residues 93–101 is complementarity-determining-3; the sequence is ZZSBZAPWT. The tract at residues 102-111 is framework-4; that stretch reads FGSGTKLEIK.

The polypeptide is Ig kappa chain V-III region TEPC 124 (Mus musculus (Mouse)).